Here is a 90-residue protein sequence, read N- to C-terminus: Small ribosomal subunit protein bS16 (90 aa).

Belongs to the bacterial ribosomal protein bS16 family.

In Bacillus anthracis (strain A0248), this protein is Small ribosomal subunit protein bS16.